A 307-amino-acid polypeptide reads, in one-letter code: Small ribosomal subunit protein uS5m (307 aa).

The transit peptide at 1 to 13 (MFKRQLSTSVRYL) directs the protein to the mitochondrion. The S5 DRBM domain maps to 144–208 (LTMKPLVMKR…WDAVRNLKEI (65 aa)).

Belongs to the universal ribosomal protein uS5 family. In terms of assembly, component of the mitochondrial small ribosomal subunit (mt-SSU). Mature yeast 74S mitochondrial ribosomes consist of a small (37S) and a large (54S) subunit. The 37S small subunit contains a 15S ribosomal RNA (15S mt-rRNA) and 34 different proteins. The 54S large subunit contains a 21S rRNA (21S mt-rRNA) and 46 different proteins. uS3m, uS4m and uS5m form the narrow entry site of the mRNA channel.

Its subcellular location is the mitochondrion. In terms of biological role, component of the mitochondrial ribosome (mitoribosome), a dedicated translation machinery responsible for the synthesis of mitochondrial genome-encoded proteins, including at least some of the essential transmembrane subunits of the mitochondrial respiratory chain. The mitoribosomes are attached to the mitochondrial inner membrane and translation products are cotranslationally integrated into the membrane. This Saccharomyces cerevisiae (strain ATCC 204508 / S288c) (Baker's yeast) protein is Small ribosomal subunit protein uS5m (MRPS5).